The chain runs to 260 residues: Resolvase (260 aa).

The 204-residue stretch at 38–241 (ELPKYLLAPE…FALDVAARHR (204 aa)) folds into the Tyr recombinase domain. Active-site residues include Arg73, Lys105, His193, Arg196, and His219. Tyr228 (O-(3'-phospho-DNA)-tyrosine intermediate) is an active-site residue.

It belongs to the 'phage' integrase family.

This resolvase acts at the RfsF equivalent resolution sequence of pColBM-CL139. This chain is Resolvase (resD), found in Escherichia coli.